The sequence spans 271 residues: 4-hydroxy-tetrahydrodipicolinate reductase (271 aa).

10–15 (GAAGRM) contacts NAD(+). Arg37 is an NADP(+) binding site. Residues 100 to 102 (GTT) and 124 to 127 (SGNM) contribute to the NAD(+) site. His157 acts as the Proton donor/acceptor in catalysis. His158 provides a ligand contact to (S)-2,3,4,5-tetrahydrodipicolinate. The Proton donor role is filled by Lys161. A (S)-2,3,4,5-tetrahydrodipicolinate-binding site is contributed by 167–168 (GT). Residues 183–202 (SLSEHEQRGRDGHTGPRKDG) form a disordered region. The segment covering 185-202 (SEHEQRGRDGHTGPRKDG) has biased composition (basic and acidic residues).

This sequence belongs to the DapB family.

Its subcellular location is the cytoplasm. The catalysed reaction is (S)-2,3,4,5-tetrahydrodipicolinate + NAD(+) + H2O = (2S,4S)-4-hydroxy-2,3,4,5-tetrahydrodipicolinate + NADH + H(+). It catalyses the reaction (S)-2,3,4,5-tetrahydrodipicolinate + NADP(+) + H2O = (2S,4S)-4-hydroxy-2,3,4,5-tetrahydrodipicolinate + NADPH + H(+). The protein operates within amino-acid biosynthesis; L-lysine biosynthesis via DAP pathway; (S)-tetrahydrodipicolinate from L-aspartate: step 4/4. Catalyzes the conversion of 4-hydroxy-tetrahydrodipicolinate (HTPA) to tetrahydrodipicolinate. This chain is 4-hydroxy-tetrahydrodipicolinate reductase, found in Beijerinckia indica subsp. indica (strain ATCC 9039 / DSM 1715 / NCIMB 8712).